The chain runs to 409 residues: uncharacterized protein (409 aa).

10 helical membrane-spanning segments follow: residues 22 to 42, 58 to 78, 99 to 119, 174 to 194, 217 to 237, 266 to 286, 293 to 312, 316 to 338, 353 to 373, and 378 to 398; these read ILIIIGICHMLNDSLQAVIPA, LGIIAFTLNMVSSVMQPVVGW, GILGLAFAPSFITILCCVFFI, FGAVWFTLVAALAVMFLMYIA, NTAITKSVVSALIIIIFLIFA, SYIFVFLLFGAIGTFLGGPLA, FVILGSLLCSAPLAIVLPFA, LAYGVLALIGLVLMSSFSVTVVY, LTVGLAFGMGAIGAVALGALI, and LTPTMIAIAFLPVLGILAFLL.

It belongs to the major facilitator superfamily.

It localises to the cell membrane. This is an uncharacterized protein from Bacillus subtilis (strain 168).